Reading from the N-terminus, the 272-residue chain is Putative pyruvate, phosphate dikinase regulatory protein (272 aa).

153–160 (GVSRTSKT) is an ADP binding site.

This sequence belongs to the pyruvate, phosphate/water dikinase regulatory protein family. PDRP subfamily.

It catalyses the reaction N(tele)-phospho-L-histidyl/L-threonyl-[pyruvate, phosphate dikinase] + ADP = N(tele)-phospho-L-histidyl/O-phospho-L-threonyl-[pyruvate, phosphate dikinase] + AMP + H(+). The catalysed reaction is N(tele)-phospho-L-histidyl/O-phospho-L-threonyl-[pyruvate, phosphate dikinase] + phosphate + H(+) = N(tele)-phospho-L-histidyl/L-threonyl-[pyruvate, phosphate dikinase] + diphosphate. Functionally, bifunctional serine/threonine kinase and phosphorylase involved in the regulation of the pyruvate, phosphate dikinase (PPDK) by catalyzing its phosphorylation/dephosphorylation. This Chelativorans sp. (strain BNC1) protein is Putative pyruvate, phosphate dikinase regulatory protein.